The primary structure comprises 359 residues: Phosphate acyltransferase (359 aa).

A disordered region spans residues 338 to 359; it reads AGGVQSAPETEAPGAHPSPHVA.

The protein belongs to the PlsX family. In terms of assembly, homodimer. Probably interacts with PlsY.

The protein resides in the cytoplasm. The enzyme catalyses a fatty acyl-[ACP] + phosphate = an acyl phosphate + holo-[ACP]. It functions in the pathway lipid metabolism; phospholipid metabolism. Functionally, catalyzes the reversible formation of acyl-phosphate (acyl-PO(4)) from acyl-[acyl-carrier-protein] (acyl-ACP). This enzyme utilizes acyl-ACP as fatty acyl donor, but not acyl-CoA. The protein is Phosphate acyltransferase of Cupriavidus taiwanensis (strain DSM 17343 / BCRC 17206 / CCUG 44338 / CIP 107171 / LMG 19424 / R1) (Ralstonia taiwanensis (strain LMG 19424)).